The chain runs to 194 residues: uncharacterized protein (194 aa).

This is an uncharacterized protein from Haemophilus influenzae (strain ATCC 51907 / DSM 11121 / KW20 / Rd).